A 747-amino-acid polypeptide reads, in one-letter code: Catalase-peroxidase 1 (747 aa).

Positions 1-22 (MTDTSDARPPHSDDKTRSHSES) are enriched in basic and acidic residues. Residues 1 to 39 (MTDTSDARPPHSDDKTRSHSESENPAIDSPEPKVHAPLT) form a disordered region. The tryptophyl-tyrosyl-methioninium (Trp-Tyr) (with M-266) cross-link spans 112–240 (WHAAGTYRIF…FGATTMGLIY (129 aa)). The active-site Proton acceptor is His-113. Residues 240-266 (YVNPEGPEGKPDPLAAAHDIRETFGRM) constitute a cross-link (tryptophyl-tyrosyl-methioninium (Tyr-Met) (with W-112)). Residue His-281 participates in heme b binding.

This sequence belongs to the peroxidase family. Peroxidase/catalase subfamily. Homodimer or homotetramer. Heme b serves as cofactor. In terms of processing, formation of the three residue Trp-Tyr-Met cross-link is important for the catalase, but not the peroxidase activity of the enzyme.

It catalyses the reaction H2O2 + AH2 = A + 2 H2O. The enzyme catalyses 2 H2O2 = O2 + 2 H2O. In terms of biological role, bifunctional enzyme with both catalase and broad-spectrum peroxidase activity. The chain is Catalase-peroxidase 1 from Mycolicibacterium vanbaalenii (strain DSM 7251 / JCM 13017 / BCRC 16820 / KCTC 9966 / NRRL B-24157 / PYR-1) (Mycobacterium vanbaalenii).